Reading from the N-terminus, the 603-residue chain is Probable GMP synthase [glutamine-hydrolyzing] (603 aa).

Positions 6–195 (KIAVVDFGGQ…FIQICGVSKT (190 aa)) constitute a Glutamine amidotransferase type-1 domain. Residue Cys-81 is the Nucleophile of the active site. Active-site residues include His-170 and Glu-172. In terms of domain architecture, GMPS ATP-PPase spans 196-392 (WGIDQFLKEK…LGLESEWVGR (197 aa)). 224–230 (SGGVDST) contacts ATP.

Homodimer.

The enzyme catalyses XMP + L-glutamine + ATP + H2O = GMP + L-glutamate + AMP + diphosphate + 2 H(+). Its pathway is purine metabolism; GMP biosynthesis; GMP from XMP (L-Gln route): step 1/1. In terms of biological role, catalyzes the synthesis of GMP from XMP. The chain is Probable GMP synthase [glutamine-hydrolyzing] (guaA) from Leptospira interrogans serogroup Icterohaemorrhagiae serovar copenhageni (strain Fiocruz L1-130).